A 1587-amino-acid polypeptide reads, in one-letter code: Sister chromatid cohesion protein mis4 (1587 aa).

Residues 140–172 (PKEKPDASSINTNRSSSDNGFLTPSSSPRSPSC) form a disordered region. Polar residues predominate over residues 147-162 (SSINTNRSSSDNGFLT). The segment covering 163–172 (PSSSPRSPSC) has biased composition (low complexity). Position 183 is a phosphoserine (Ser-183). HEAT repeat units lie at residues 775–812 (LNLKFFVSLIIGFLDSPQASLRTKCLRIINQMKTIPSI), 814–851 (RTHPEVLAQIISKSNDQSAIVRDTVLDLLGTYIMAYRE), 853–888 (IPQIYGCIISGISDPSTIVRKRAIKQLCEVYEATED), 890–927 (NIRVDIASKLLTRSNDEEETISELSLEVLEKLWFSPAS), 1101–1140 (ATLMEIVPCLCSLFTRLNDYERLKKIVVSCLKSLEEARHS), and 1183–1220 (DAYVILLGYFQKLLKDAKGQLRIHIIDNMSRICLRETS).

Belongs to the SCC2/Nipped-B family. As to quaternary structure, interacts with ssl3.

The protein localises to the nucleus. It localises to the chromosome. Plays a structural role in chromatin. Chromatid cohesion molecule required for equal sister chromatid separation in anaphase. May form a stable link between chromatids in S phase that is split rather than removed in anaphase. Also required for spindle-kinetochore interaction in early mitosis and inhibit sister chromatid separation until the cleavage of Rad21 in anaphase. The polypeptide is Sister chromatid cohesion protein mis4 (mis4) (Schizosaccharomyces pombe (strain 972 / ATCC 24843) (Fission yeast)).